A 440-amino-acid polypeptide reads, in one-letter code: GTPase Der (440 aa).

2 EngA-type G domains span residues 4–168 (PIVA…PENK) and 177–352 (IKVA…NQRA). GTP is bound by residues 10-17 (GRPNVGKS), 57-61 (DTGGI), 120-123 (NKVD), 183-190 (GKPNVGKS), 230-234 (DTAGL), and 295-298 (NKWD). Residues 353–437 (MRVPTGGLNE…PIRFIYREKS (85 aa)) enclose the KH-like domain.

This sequence belongs to the TRAFAC class TrmE-Era-EngA-EngB-Septin-like GTPase superfamily. EngA (Der) GTPase family. In terms of assembly, associates with the 50S ribosomal subunit.

GTPase that plays an essential role in the late steps of ribosome biogenesis. The sequence is that of GTPase Der from Alkaliphilus metalliredigens (strain QYMF).